The primary structure comprises 1357 residues: DNA-directed RNA polymerase subunit beta (1357 aa).

It belongs to the RNA polymerase beta chain family. In terms of assembly, the RNAP catalytic core consists of 2 alpha, 1 beta, 1 beta' and 1 omega subunit. When a sigma factor is associated with the core the holoenzyme is formed, which can initiate transcription.

The enzyme catalyses RNA(n) + a ribonucleoside 5'-triphosphate = RNA(n+1) + diphosphate. In terms of biological role, DNA-dependent RNA polymerase catalyzes the transcription of DNA into RNA using the four ribonucleoside triphosphates as substrates. In Pseudomonas aeruginosa (strain UCBPP-PA14), this protein is DNA-directed RNA polymerase subunit beta.